The following is a 157-amino-acid chain: 2-C-methyl-D-erythritol 2,4-cyclodiphosphate synthase (157 aa).

A divalent metal cation-binding residues include D8 and H10. 4-CDP-2-C-methyl-D-erythritol 2-phosphate contacts are provided by residues 8-10 (DVH) and 34-35 (HS). Residue H42 participates in a divalent metal cation binding. 4-CDP-2-C-methyl-D-erythritol 2-phosphate is bound by residues 56–58 (DIG), 61–65 (FPDTD), 132–135 (TTTE), F139, and R142.

The protein belongs to the IspF family. Homotrimer. A divalent metal cation serves as cofactor.

It carries out the reaction 4-CDP-2-C-methyl-D-erythritol 2-phosphate = 2-C-methyl-D-erythritol 2,4-cyclic diphosphate + CMP. It functions in the pathway isoprenoid biosynthesis; isopentenyl diphosphate biosynthesis via DXP pathway; isopentenyl diphosphate from 1-deoxy-D-xylulose 5-phosphate: step 4/6. Involved in the biosynthesis of isopentenyl diphosphate (IPP) and dimethylallyl diphosphate (DMAPP), two major building blocks of isoprenoid compounds. Catalyzes the conversion of 4-diphosphocytidyl-2-C-methyl-D-erythritol 2-phosphate (CDP-ME2P) to 2-C-methyl-D-erythritol 2,4-cyclodiphosphate (ME-CPP) with a corresponding release of cytidine 5-monophosphate (CMP). The protein is 2-C-methyl-D-erythritol 2,4-cyclodiphosphate synthase of Geotalea uraniireducens (strain Rf4) (Geobacter uraniireducens).